A 772-amino-acid polypeptide reads, in one-letter code: Probable beta-glucosidase M (772 aa).

Positions 1–20 are cleaved as a signal peptide; sequence MLTSWGKTGFVLALALGGRA. The N-linked (GlcNAc...) asparagine glycan is linked to N259. D287 is an active-site residue. N-linked (GlcNAc...) asparagine glycans are attached at residues N315, N322, N438, N523, N547, N574, and N586.

This sequence belongs to the glycosyl hydrolase 3 family.

Its subcellular location is the secreted. The enzyme catalyses Hydrolysis of terminal, non-reducing beta-D-glucosyl residues with release of beta-D-glucose.. It participates in glycan metabolism; cellulose degradation. In terms of biological role, beta-glucosidases are one of a number of cellulolytic enzymes involved in the degradation of cellulosic biomass. Catalyzes the last step releasing glucose from the inhibitory cellobiose. The chain is Probable beta-glucosidase M (bglM) from Emericella nidulans (strain FGSC A4 / ATCC 38163 / CBS 112.46 / NRRL 194 / M139) (Aspergillus nidulans).